A 415-amino-acid polypeptide reads, in one-letter code: Transfer protein TraSA (415 aa).

A FtsK domain is found at 127-326 (DGAVHYRDYR…HRVNDETSAN (200 aa)). ATP is bound at residue 145 to 152 (GATESGKS).

This Streptomyces ambofaciens protein is Transfer protein TraSA (traSA).